The following is a 344-amino-acid chain: Uroporphyrinogen decarboxylase (344 aa).

Residues 23 to 27 (RQAGR), D73, Y149, T204, and H321 each bind substrate.

It belongs to the uroporphyrinogen decarboxylase family. As to quaternary structure, homodimer.

The protein localises to the cytoplasm. The enzyme catalyses uroporphyrinogen III + 4 H(+) = coproporphyrinogen III + 4 CO2. It participates in porphyrin-containing compound metabolism; protoporphyrin-IX biosynthesis; coproporphyrinogen-III from 5-aminolevulinate: step 4/4. Catalyzes the decarboxylation of four acetate groups of uroporphyrinogen-III to yield coproporphyrinogen-III. The sequence is that of Uroporphyrinogen decarboxylase from Francisella tularensis subsp. holarctica (strain LVS).